A 50-amino-acid chain; its full sequence is uncharacterized protein (50 aa).

This is an uncharacterized protein from Dichelobacter nodosus (Bacteroides nodosus).